The chain runs to 411 residues: Peptidase T (411 aa).

A Zn(2+)-binding site is contributed by H79. The active site involves D81. D142 contributes to the Zn(2+) binding site. The active-site Proton acceptor is E176. Residues E177, D199, and H381 each contribute to the Zn(2+) site.

The protein belongs to the peptidase M20B family. Requires Zn(2+) as cofactor.

The protein resides in the cytoplasm. It carries out the reaction Release of the N-terminal residue from a tripeptide.. Cleaves the N-terminal amino acid of tripeptides. This Exiguobacterium sibiricum (strain DSM 17290 / CCUG 55495 / CIP 109462 / JCM 13490 / 255-15) protein is Peptidase T.